A 604-amino-acid polypeptide reads, in one-letter code: Baculoviral IAP repeat-containing protein 3 (604 aa).

BIR repeat units lie at residues 29 to 96, 169 to 235, and 255 to 322; these read ELYR…CRFV, ENAR…CPFI, and HAAR…CEYL. The Zn(2+) site is built by C292, C295, H312, and C319. Residues 439–529 form the CARD domain; that stretch reads KESNDLLLIR…VLYEHLFVQQ (91 aa). The segment at 557–592 adopts an RING-type zinc-finger fold; it reads CKVCMDKEVSIVFIPCGHLVVCKDCAPSLRKCPICR.

Belongs to the IAP family. Interacts with PRSS25; interaction inhibits apoptotic suppressor activity. The BIR motifs region interacts with TNF receptor associated factors 1 and 2 (TRAF1 and TRAF2) to form a heteromeric complex, which is then recruited to the tumor necrosis factor receptor 2 (TNFR2). Interaction with TRAF2 is required for ubiquitination of IKBKE, degradation of NFKBIA and activation of NF-kappa-B. Interacts with RIP1, RIP2, RIP3, RIP4 and USP19. Post-translationally, auto-ubiquitinated and degraded by the proteasome in apoptotic cells. In terms of tissue distribution, highly expressed in fetal lung, and kidney. In the adult, expression is mainly seen in lymphoid tissues, including spleen, thymus and peripheral blood lymphocytes.

It is found in the cytoplasm. Its subcellular location is the nucleus. It catalyses the reaction S-ubiquitinyl-[E2 ubiquitin-conjugating enzyme]-L-cysteine + [acceptor protein]-L-lysine = [E2 ubiquitin-conjugating enzyme]-L-cysteine + N(6)-ubiquitinyl-[acceptor protein]-L-lysine.. USP19 regulates the stability of BIRC3/c-IAP2 by preventing its ubiquitination. Multi-functional protein which regulates not only caspases and apoptosis, but also modulates inflammatory signaling and immunity, mitogenic kinase signaling and cell proliferation, as well as cell invasion and metastasis. Acts as an E3 ubiquitin-protein ligase regulating NF-kappa-B signaling and regulates both canonical and non-canonical NF-kappa-B signaling by acting in opposite directions: acts as a positive regulator of the canonical pathway and suppresses constitutive activation of non-canonical NF-kappa-B signaling. The target proteins for its E3 ubiquitin-protein ligase activity include: RIPK1, RIPK2, RIPK3, RIPK4, CASP3, CASP7, CASP8, IKBKE, TRAF1, and BCL10. Acts as an important regulator of innate immune signaling via regulation of Toll-like receptors (TLRs), Nodlike receptors (NLRs) and RIG-I like receptors (RLRs), collectively referred to as pattern recognition receptors (PRRs). Protects cells from spontaneous formation of the ripoptosome, a large multi-protein complex that has the capability to kill cancer cells in a caspase-dependent and caspase-independent manner. Suppresses ripoptosome formation by ubiquitinating RIPK1 and CASP8. This chain is Baculoviral IAP repeat-containing protein 3 (BIRC3), found in Homo sapiens (Human).